The sequence spans 622 residues: Pheromone-processing carboxypeptidase KEX1 (622 aa).

A signal peptide spans 1–23 (MAILSTVPALLFALASWAPTVAA). Over 24–509 (QSAADYFVHE…DEAKWKAYYR (486 aa)) the chain is Lumenal. The N-linked (GlcNAc...) asparagine glycan is linked to Asn-111. Residues Ser-175 and Asp-375 contribute to the active site. N-linked (GlcNAc...) asparagine glycosylation is found at Asn-426 and Asn-434. The active site involves His-437. The disordered stretch occupies residues 465–492 (TPTDSRLDGEQGPATSVGDIGKNGTSAD). Asn-487 carries an N-linked (GlcNAc...) asparagine glycan. The helical transmembrane segment at 510–530 (SGEIVLVIVIIAAGAWGWYVW) threads the bilayer. Residues 531 to 622 (RERRKRRGYS…SRSNGGRSGR (92 aa)) are Cytoplasmic-facing. Residues 539–622 (YSGIMGNTPP…SRSNGGRSGR (84 aa)) form a disordered region. Residues 559 to 571 (EGFRDRRTGRDVE) are compositionally biased toward basic and acidic residues.

It belongs to the peptidase S10 family.

It localises to the golgi apparatus. The protein resides in the trans-Golgi network membrane. It carries out the reaction Preferential release of a C-terminal arginine or lysine residue.. Protease with a carboxypeptidase B-like function involved in the C-terminal processing of the lysine and arginine residues from protein precursors. Promotes cell fusion and is involved in the programmed cell death. The chain is Pheromone-processing carboxypeptidase KEX1 (KEX1) from Colletotrichum graminicola (strain M1.001 / M2 / FGSC 10212) (Maize anthracnose fungus).